The primary structure comprises 634 residues: Chaperone protein HtpG (634 aa).

The interval 1–342 (MTVETQKETL…SNDLSLNVSR (342 aa)) is a; substrate-binding. Positions 343-559 (EILQKDPIID…EQDLGLQMRQ (217 aa)) are b. Residues 560–634 (ILEASGQKVP…LNKLLVELSA (75 aa)) form a c region.

It belongs to the heat shock protein 90 family. Homodimer.

The protein localises to the cytoplasm. In terms of biological role, molecular chaperone. Has ATPase activity. The polypeptide is Chaperone protein HtpG (Pseudomonas putida (strain ATCC 47054 / DSM 6125 / CFBP 8728 / NCIMB 11950 / KT2440)).